Reading from the N-terminus, the 305-residue chain is Ribonuclease BN (305 aa).

The Zn(2+) site is built by histidine 64, histidine 66, aspartate 68, histidine 69, histidine 141, aspartate 212, and histidine 270. Catalysis depends on aspartate 68, which acts as the Proton acceptor.

The protein belongs to the RNase Z family. RNase BN subfamily. As to quaternary structure, homodimer. Zn(2+) serves as cofactor.

Its function is as follows. Zinc phosphodiesterase, which has both exoribonuclease and endoribonuclease activities. This chain is Ribonuclease BN, found in Escherichia coli O45:K1 (strain S88 / ExPEC).